The sequence spans 411 residues: Multifunctional CCA protein (411 aa).

The ATP site is built by Gly8 and Arg11. Positions 8 and 11 each coordinate CTP. Mg(2+) contacts are provided by Glu21 and Asp23. ATP contacts are provided by Arg91, Arg137, and Arg140. Positions 91, 137, and 140 each coordinate CTP. The HD domain maps to 228 to 329 (TGVHALLALE…LKTLLALDGL (102 aa)).

This sequence belongs to the tRNA nucleotidyltransferase/poly(A) polymerase family. Bacterial CCA-adding enzyme type 1 subfamily. In terms of assembly, monomer. Can also form homodimers and oligomers. It depends on Mg(2+) as a cofactor. Requires Ni(2+) as cofactor.

It catalyses the reaction a tRNA precursor + 2 CTP + ATP = a tRNA with a 3' CCA end + 3 diphosphate. It carries out the reaction a tRNA with a 3' CCA end + 2 CTP + ATP = a tRNA with a 3' CCACCA end + 3 diphosphate. Functionally, catalyzes the addition and repair of the essential 3'-terminal CCA sequence in tRNAs without using a nucleic acid template. Adds these three nucleotides in the order of C, C, and A to the tRNA nucleotide-73, using CTP and ATP as substrates and producing inorganic pyrophosphate. tRNA 3'-terminal CCA addition is required both for tRNA processing and repair. Also involved in tRNA surveillance by mediating tandem CCA addition to generate a CCACCA at the 3' terminus of unstable tRNAs. While stable tRNAs receive only 3'-terminal CCA, unstable tRNAs are marked with CCACCA and rapidly degraded. This Teredinibacter turnerae (strain ATCC 39867 / T7901) protein is Multifunctional CCA protein.